A 179-amino-acid polypeptide reads, in one-letter code: Large ribosomal subunit protein uL6 (179 aa).

The protein belongs to the universal ribosomal protein uL6 family. As to quaternary structure, part of the 50S ribosomal subunit.

Its function is as follows. This protein binds to the 23S rRNA, and is important in its secondary structure. It is located near the subunit interface in the base of the L7/L12 stalk, and near the tRNA binding site of the peptidyltransferase center. This is Large ribosomal subunit protein uL6 from Fructilactobacillus sanfranciscensis (Lactobacillus sanfranciscensis).